The sequence spans 407 residues: Chorismate synthase (407 aa).

Arg-40 and Arg-46 together coordinate NADP(+). Residues 138–140 (RAS) and 259–260 (QA) contribute to the FMN site. Residues 275–284 (RRGSRAHDEM) show a composition bias toward basic and acidic residues. The segment at 275–308 (RRGSRAHDEMYPGTDGVVRSTNRAGGLEGGMTNG) is disordered. FMN contacts are provided by residues Gly-303, 318-322 (KPIST), and Arg-344.

It belongs to the chorismate synthase family. In terms of assembly, homotetramer. The cofactor is FMNH2.

It carries out the reaction 5-O-(1-carboxyvinyl)-3-phosphoshikimate = chorismate + phosphate. It participates in metabolic intermediate biosynthesis; chorismate biosynthesis; chorismate from D-erythrose 4-phosphate and phosphoenolpyruvate: step 7/7. In terms of biological role, catalyzes the anti-1,4-elimination of the C-3 phosphate and the C-6 proR hydrogen from 5-enolpyruvylshikimate-3-phosphate (EPSP) to yield chorismate, which is the branch point compound that serves as the starting substrate for the three terminal pathways of aromatic amino acid biosynthesis. This reaction introduces a second double bond into the aromatic ring system. This Mycobacterium ulcerans (strain Agy99) protein is Chorismate synthase.